The following is a 332-amino-acid chain: L-lactate dehydrogenase A chain (332 aa).

Residues 29 to 57 (GMVG…MEDK) and Arg-99 contribute to the NAD(+) site. Residues Arg-106, Asn-138, and Arg-169 each contribute to the substrate site. Asn-138 is an NAD(+) binding site. His-193 serves as the catalytic Proton acceptor. Substrate is bound at residue Thr-248.

It belongs to the LDH/MDH superfamily. LDH family. In terms of assembly, homotetramer.

It is found in the cytoplasm. It carries out the reaction (S)-lactate + NAD(+) = pyruvate + NADH + H(+). The protein operates within fermentation; pyruvate fermentation to lactate; (S)-lactate from pyruvate: step 1/1. In terms of biological role, interconverts simultaneously and stereospecifically pyruvate and lactate with concomitant interconversion of NADH and NAD(+). This is L-lactate dehydrogenase A chain (ldha) from Sphyraena argentea (Pacific barracuda).